The following is a 399-amino-acid chain: Type II secretion system protein L (399 aa).

At 1–247 the chain is on the cytoplasmic side; sequence MSKAENTSGK…VKPWKQALLP (247 aa). A helical membrane pass occupies residues 248–264; it reads WRNVLIALSAWLLLVLG. Residues 265 to 399 are Periplasmic-facing; sequence ESVWTHYQWY…EGQLTLRSQP (135 aa).

Belongs to the GSP L family. As to quaternary structure, type II secretion system is composed of four main components: the outer membrane complex, the inner membrane complex, the cytoplasmic secretion ATPase and the periplasm-spanning pseudopilus. Forms homodimers. Interacts with OutM/GspM. Interacts with OutE/GspE and OutF/GspF.

Its subcellular location is the cell inner membrane. Functionally, inner membrane component of the type II secretion system required for the energy-dependent secretion of extracellular factors such as proteases and toxins from the periplasm. Plays a role in the complex assembly and recruits OutM resulting in a stable complex in the inner membrane. Provides thus a link between the energy-providing OutE protein in the cytoplasm and the rest of the T2SS machinery. The chain is Type II secretion system protein L (outL) from Dickeya chrysanthemi (Pectobacterium chrysanthemi).